Reading from the N-terminus, the 252-residue chain is Ribosomal RNA small subunit methyltransferase J (252 aa).

Residues 101-102 (RD), 117-118 (ER), 153-154 (SS), and Asp171 contribute to the S-adenosyl-L-methionine site.

This sequence belongs to the methyltransferase superfamily. RsmJ family.

It is found in the cytoplasm. It carries out the reaction guanosine(1516) in 16S rRNA + S-adenosyl-L-methionine = N(2)-methylguanosine(1516) in 16S rRNA + S-adenosyl-L-homocysteine + H(+). Functionally, specifically methylates the guanosine in position 1516 of 16S rRNA. The polypeptide is Ribosomal RNA small subunit methyltransferase J (Salmonella choleraesuis (strain SC-B67)).